The sequence spans 149 residues: Large ribosomal subunit protein bL20m (149 aa).

Residues 1–9 (MVFLSLSRW) constitute a mitochondrion transit peptide.

Belongs to the bacterial ribosomal protein bL20 family. In terms of assembly, component of the mitochondrial ribosome large subunit (39S) which comprises a 16S rRNA and about 50 distinct proteins.

It is found in the mitochondrion. This Xenopus laevis (African clawed frog) protein is Large ribosomal subunit protein bL20m (mrpl20).